Here is a 315-residue protein sequence, read N- to C-terminus: DNA-directed RNA polymerase subunit alpha (315 aa).

The alpha N-terminal domain (alpha-NTD) stretch occupies residues 1-228 (MLEIEKPKIE…EHLRLFVGLT (228 aa)). The alpha C-terminal domain (alpha-CTD) stretch occupies residues 245–315 (KNKLLEMPIE…LGLDLRHDEE (71 aa)).

It belongs to the RNA polymerase alpha chain family. Homodimer. The RNAP catalytic core consists of 2 alpha, 1 beta, 1 beta' and 1 omega subunit. When a sigma factor is associated with the core the holoenzyme is formed, which can initiate transcription.

The catalysed reaction is RNA(n) + a ribonucleoside 5'-triphosphate = RNA(n+1) + diphosphate. Its function is as follows. DNA-dependent RNA polymerase catalyzes the transcription of DNA into RNA using the four ribonucleoside triphosphates as substrates. This chain is DNA-directed RNA polymerase subunit alpha, found in Desulforudis audaxviator (strain MP104C).